The sequence spans 415 residues: Zinc finger protein ZFMSA12A (415 aa).

Residues Met-1–Pro-36 form a disordered region. 12 C2H2-type zinc fingers span residues His-78–His-100, Tyr-106–Cys-129, Tyr-134–His-156, Phe-161–His-183, Phe-189–His-211, Asn-217–His-239, Gln-245–His-267, Phe-273–His-295, Tyr-301–His-323, Tyr-329–His-351, Tyr-357–His-379, and Tyr-385–His-407.

The protein resides in the nucleus. This Micropterus salmoides (Largemouth bass) protein is Zinc finger protein ZFMSA12A.